The primary structure comprises 33 residues: Pardaxin P-5 (33 aa).

Belongs to the pardaxin family. In terms of assembly, monomer. In aqueous solution exists as a tetramer.

The protein localises to the secreted. The protein resides in the target cell membrane. Functionally, exhibits unusual shark repellent and surfactant properties. Forms voltage-dependent, ion-permeable channels in membranes. At high concentration causes cell membrane lysis. In Pardachirus marmoratus (Finless sole), this protein is Pardaxin P-5.